Here is a 187-residue protein sequence, read N- to C-terminus: MASSVMSTATVATGANAAQASMIASFNGLKSAASFPVTRKQDLDITSIASNGGRVECMLVWPPINKKKYETLSYLPDLSDEQLLKEIEYLLQKGWVPCLEFETEHGFVYREHHRSPGYYDGRYWTMWKLPMFGCTDATQVLNEVQEAKKAYPQAWIRIIGFDNVRQVQCISFIAYKPEATKFSMFNV.

The N-terminal 56 residues, 1–56, are a transit peptide targeting the chloroplast; the sequence is MASSVMSTATVATGANAAQASMIASFNGLKSAASFPVTRKQDLDITSIASNGGRVE.

This sequence belongs to the RuBisCO small chain family. Heterohexadecamer of 8 large and 8 small subunits.

It is found in the plastid. It localises to the chloroplast. In terms of biological role, ruBisCO catalyzes two reactions: the carboxylation of D-ribulose 1,5-bisphosphate, the primary event in carbon dioxide fixation, as well as the oxidative fragmentation of the pentose substrate. Both reactions occur simultaneously and in competition at the same active site. Although the small subunit is not catalytic it is essential for maximal activity. The polypeptide is Ribulose bisphosphate carboxylase small subunit, chloroplastic (Capsicum annuum (Capsicum pepper)).